Here is a 289-residue protein sequence, read N- to C-terminus: ADP-polyphosphate phosphotransferase (289 aa).

It belongs to the polyphosphate kinase 2 (PPK2) family. Class I subfamily.

The enzyme catalyses [phosphate](n) + ATP = [phosphate](n+1) + ADP. Uses inorganic polyphosphate (polyP) as a donor to convert ADP to ATP. In Rhodopseudomonas palustris (strain ATCC BAA-98 / CGA009), this protein is ADP-polyphosphate phosphotransferase.